The sequence spans 866 residues: Potassium voltage-gated channel subfamily KQT member 3 (866 aa).

Residues 1–42 (MGLKARRPAGAAGGGGDGGGGGGGAANPAGGDAAAAGDEERK) form a disordered region. At 1-120 (MGLKARRPAG…IYDALERPRG (120 aa)) the chain is on the cytoplasmic side. A compositionally biased stretch (gly residues) spans 11-25 (AAGGGGDGGGGGGGA). Residues 26-36 (ANPAGGDAAAA) are compositionally biased toward low complexity. A Phosphothreonine modification is found at Thr81. The helical transmembrane segment at 121 to 143 (WALLYHALVFLIVLGCLILAVLT) threads the bilayer. The Extracellular segment spans residues 144-153 (TFREYETVSG). The chain crosses the membrane as a helical span at residues 154-175 (DWLLLLETFAIFIFGAEFALRI). Topologically, residues 176–193 (WAAGCCCRYKGWRGRLKF) are cytoplasmic. The chain crosses the membrane as a helical span at residues 194–213 (ARKPLCMLDIFVLIASVPVV). At 214–225 (AVGNQGNVLATS) the chain is on the extracellular side. Residues 226–244 (LRSLRFLQILRMLRMDRRG) form a helical; Voltage-sensor membrane-spanning segment. Residue Arg243 coordinates a 1,2-diacyl-sn-glycero-3-phospho-(1D-myo-inositol-4,5-bisphosphate). Residues 245 to 256 (GTWKLLGSAICA) lie on the Cytoplasmic side of the membrane. The helical transmembrane segment at 257 to 282 (HSKELITAWYIGFLTLILSSFLVYLV) threads the bilayer. An a 1,2-diacyl-sn-glycero-3-phospho-(1D-myo-inositol-4,5-bisphosphate)-binding site is contributed by Lys259. The Extracellular segment spans residues 283–302 (EKDVPEVDAQGEEMKEEFET). The segment at residues 303-315 (YADALWWGLITLA) is an intramembrane region (pore-forming). The Selectivity filter signature appears at 316–321 (TIGYGD). The Extracellular segment spans residues 316-326 (TIGYGDKTPKT). Residues 327 to 353 (WEGRLIAATFSLIGVSFFALPAGILGS) form a helical membrane-spanning segment. Over 354–866 (GLALKVQEQH…SIWTPSGKPT (513 aa)) the chain is Cytoplasmic. The tract at residues 356–537 (ALKVQEQHRQ…RLYKKKFKET (182 aa)) is mediates interaction with calmodulin. An a 1,2-diacyl-sn-glycero-3-phospho-(1D-myo-inositol-4,5-bisphosphate)-binding site is contributed by Lys366. Disordered regions lie at residues 574–617 (PGPP…EDQS), 656–676 (GFSPSKGASSPAEAEQKEDRR), and 757–866 (QVEL…GKPT). Residues 837–866 (EPFTPSGSLPLSSTGDGISDSIWTPSGKPT) are compositionally biased toward polar residues.

Belongs to the potassium channel family. KQT (TC 1.A.1.15) subfamily. Kv7.3/KCNQ3 sub-subfamily. In terms of assembly, heterotetramer with KCNQ2; forms heterotetrameric native M-channel responsible for the M-current. Interacts with calmodulin; the interaction is calcium-independent, constitutive and participates in the proper assembly of a functional M-channel. Heteromultimer with KCNQ5. May associate with KCNE2. Interacts with IQCJ-SCHIP1. Interacts (via the pore module) with SLC5A3/SMIT1; forms a coregulatory complex that alters ion selectivity, voltage dependence and gating kinetics of the channel. Post-translationally, KCNQ2/KCNQ3 are ubiquitinated by NEDD4L. Ubiquitination leads to protein degradation. Degradation induced by NEDD4L is inhibited by USP36.

The protein localises to the cell membrane. The enzyme catalyses K(+)(in) = K(+)(out). It carries out the reaction Rb(+)(in) = Rb(+)(out). It catalyses the reaction Cs(+)(in) = Cs(+)(out). The catalysed reaction is Na(+)(in) = Na(+)(out). Phosphatidylinositol-4,5-bisphosphate (PIP2) potentiates the activation of KCNQ channels by enhancing the electro-mechanical coupling of the voltage-sensing domain (VSD) and the pore-forming domain (PD). In the closed state of the channel, PIP2 is anchored at the S2-S3 loop; upon channel activation, PIP2 interacts with the S4-S5 linker and is involved in channel gating. Calcium suppresses KCNQ2-KCNQ3 channel currents, with calcium-bound calmodulin inducing a change in channel configuration which leads to the reduction of channel affinity for PIP2 and subsequent current suppression. Functionally, pore-forming subunit of the voltage-gated potassium (Kv) M-channel which is responsible for the M-current, a key controller of neuronal excitability. M-channel is composed of pore-forming subunits KCNQ2 and KCNQ3 assembled as heterotetramers. The native M-current has a slowly activating and deactivating potassium conductance which plays a critical role in determining the subthreshold electrical excitability of neurons as well as the responsiveness to synaptic inputs. M-channel is selectively permeable in vitro to other cations besides potassium, in decreasing order of affinity K(+) &gt; Rb(+) &gt; Cs(+) &gt; Na(+). M-channel association with SLC5A3/SMIT1 alters channel ion selectivity, increasing Na(+) and Cs(+) permeation relative to K(+). Suppressed by activation of M1 muscarinic acetylcholine receptors. KCNQ3 also associates with KCNQ5 to form a functional channel in vitro and may also contribute to the M-current in brain. The sequence is that of Potassium voltage-gated channel subfamily KQT member 3 from Bos taurus (Bovine).